We begin with the raw amino-acid sequence, 471 residues long: 3-isopropylmalate dehydratase large subunit (471 aa).

The [4Fe-4S] cluster site is built by C347, C407, and C410.

Belongs to the aconitase/IPM isomerase family. LeuC type 1 subfamily. Heterodimer of LeuC and LeuD. It depends on [4Fe-4S] cluster as a cofactor.

The enzyme catalyses (2R,3S)-3-isopropylmalate = (2S)-2-isopropylmalate. It functions in the pathway amino-acid biosynthesis; L-leucine biosynthesis; L-leucine from 3-methyl-2-oxobutanoate: step 2/4. Catalyzes the isomerization between 2-isopropylmalate and 3-isopropylmalate, via the formation of 2-isopropylmaleate. The chain is 3-isopropylmalate dehydratase large subunit from Vibrio parahaemolyticus serotype O3:K6 (strain RIMD 2210633).